The following is a 299-amino-acid chain: tRNA dimethylallyltransferase (299 aa).

10-17 (GPTASGKS) serves as a coordination point for ATP. Residue 12–17 (TASGKS) coordinates substrate.

The protein belongs to the IPP transferase family. Monomer. The cofactor is Mg(2+).

The enzyme catalyses adenosine(37) in tRNA + dimethylallyl diphosphate = N(6)-dimethylallyladenosine(37) in tRNA + diphosphate. Functionally, catalyzes the transfer of a dimethylallyl group onto the adenine at position 37 in tRNAs that read codons beginning with uridine, leading to the formation of N6-(dimethylallyl)adenosine (i(6)A). The polypeptide is tRNA dimethylallyltransferase (Malacoplasma penetrans (strain HF-2) (Mycoplasma penetrans)).